A 430-amino-acid polypeptide reads, in one-letter code: Phosphoserine aminotransferase 1, chloroplastic (430 aa).

The N-terminal 51 residues, 1–51, are a transit peptide targeting the chloroplast; it reads MAATTNSFLVGSNNTQIPALKPKSSSQSFLHLSKPNTVNFVSKTKPVAVRC. The residue at position 52 (V52) is an N-acetylvaline. R111 serves as a coordination point for L-glutamate. Pyridoxal 5'-phosphate is bound by residues 145-146, W171, T221, D241, and Q264; that span reads AT. K265 is subject to N6-(pyridoxal phosphate)lysine. A pyridoxal 5'-phosphate-binding site is contributed by 306-307; sequence NT.

The protein belongs to the class-V pyridoxal-phosphate-dependent aminotransferase family. SerC subfamily. In terms of assembly, homodimer. Pyridoxal 5'-phosphate is required as a cofactor. In terms of tissue distribution, ubiquitous, but expressed preferentially in light-grown roots and shoots. Detected in root meristems and in root tissues surrounding the vascular bundle.

It is found in the plastid. Its subcellular location is the chloroplast. It catalyses the reaction O-phospho-L-serine + 2-oxoglutarate = 3-phosphooxypyruvate + L-glutamate. The enzyme catalyses 4-(phosphooxy)-L-threonine + 2-oxoglutarate = (R)-3-hydroxy-2-oxo-4-phosphooxybutanoate + L-glutamate. It participates in amino-acid biosynthesis; L-serine biosynthesis; L-serine from 3-phospho-D-glycerate: step 2/3. Its pathway is cofactor biosynthesis; pyridoxine 5'-phosphate biosynthesis; pyridoxine 5'-phosphate from D-erythrose 4-phosphate: step 3/5. Its activity is regulated as follows. Inhibited by high concentration of cysteine and by 3-phosphonooxypyruvate. Not inhibited by serine, threonine, valine, glycine, tryptophan and O-acetyl-L-serine. Functionally, involved in the plastidial phosphorylated pathway of serine biosynthesis (PPSB). Catalyzes the reversible conversion of 3-phosphohydroxypyruvate to phosphoserine. The polypeptide is Phosphoserine aminotransferase 1, chloroplastic (Arabidopsis thaliana (Mouse-ear cress)).